The sequence spans 122 residues: Large ribosomal subunit protein uL14 (122 aa).

Belongs to the universal ribosomal protein uL14 family. In terms of assembly, part of the 50S ribosomal subunit. Forms a cluster with proteins L3 and L19. In the 70S ribosome, L14 and L19 interact and together make contacts with the 16S rRNA in bridges B5 and B8.

Binds to 23S rRNA. Forms part of two intersubunit bridges in the 70S ribosome. The sequence is that of Large ribosomal subunit protein uL14 from Herpetosiphon aurantiacus (strain ATCC 23779 / DSM 785 / 114-95).